The chain runs to 377 residues: uncharacterized protein (377 aa).

Disordered stretches follow at residues 10-79, 91-141, 182-257, 265-284, and 289-326; these read YSDG…NVNN, KKNN…DKEE, EAKK…TTTT, ENEN…EPIE, and LEFN…KEEP. Composition is skewed to low complexity over residues 14 to 24, 46 to 79, and 93 to 124; these read IPQPTITPPTQ, NKNN…NVNN, and NNNN…FNDN. Composition is skewed to basic and acidic residues over residues 182–196 and 209–218; these read EAKK…KRGE and QTPDKKKKLE. Positions 221-257 are enriched in low complexity; it reads TSKNNNKSSTTKTELTNTTTNTSSTTNPTTDTTTTTT. Basic and acidic residues-rich tracts occupy residues 265 to 274 and 292 to 303; these read ENENQEKENN and NKFEEKPIKEVK. Residues 311–320 are compositionally biased toward basic residues; sequence KRNKKRNNPK.

This is an uncharacterized protein from Dictyostelium discoideum (Social amoeba).